The following is a 164-amino-acid chain: Cyclin-dependent kinase inhibitor 1 (164 aa).

Serine 2 is modified (N-acetylserine). Serine 2 participates in a covalent cross-link: Glycyl serine ester (Ser-Gly) (interchain with G-Cter in ubiquitin). A C4-type zinc finger spans residues 13–41 (CGSKACRRLFGPVDSEQLSRDCDALMAGC). The required for binding cyclins stretch occupies residues 17 to 24 (ACRRLFGP). The segment at 53–58 (FVTETP) is required for binding CDKs. Positions 76–164 (LYLPTGPRRG…RRLIFSKRKP (89 aa)) are disordered. Threonine 80 is modified (phosphothreonine; by LKB1). Serine 114 bears the Phosphoserine; by GSK3-beta mark. Serine 130 is subject to Phosphoserine. Residues 140–164 (RKRRQTSMTDFYHSKRRLIFSKRKP) carry the PIP-box K+4 motif motif. The Nuclear localization signal motif lies at 141–156 (KRRQTSMTDFYHSKRR). At threonine 145 the chain carries Phosphothreonine; by PKA, PKB/AKT1, PIM1 and PIM2. Serine 146 is subject to Phosphoserine; by PKC and NUAK1. Positions 152-164 (HSKRRLIFSKRKP) are interaction with TRIM39. The span at 153–164 (SKRRLIFSKRKP) shows a compositional bias: basic residues. Serine 160 is subject to Phosphoserine; by PKC; in vitro.

The protein belongs to the CDI family. Interacts with HDAC1; the interaction is prevented by competitive binding of C10orf90/FATS to HDAC1 facilitating acetylation and protein stabilization of CDKN1A/p21. Interacts with MKRN1. Interacts with PSMA3. Interacts with PCNA. Component of the ternary complex, cyclin D-CDK4-CDKN1A. Interacts (via its N-terminal domain) with CDK4; the interaction promotes the assembly of the cyclin D-CDK4 complex, its nuclear translocation and promotes the cyclin D-dependent enzyme activity of CDK4. Binding to CDK2 leads to CDK2/cyclin E inactivation at the G1-S phase DNA damage checkpoint, thereby arresting cells at the G1-S transition during DNA repair. Interacts with PIM1. Interacts with STK11 and NUAK1. Interacts wih DTL. Interacts with isoform 1 and isoform 2 of TRIM39. Interacts with PKP3; the interaction sequesters CDKN1A to the cytoplasm thereby repressing its role as an inhibitor of CDK4- and CDK6-driven RB1 phosphorylation. In terms of processing, phosphorylation of Thr-145 by Akt or of Ser-146 by PKC impairs binding to PCNA. Phosphorylation at Ser-114 by GSK3-beta enhances ubiquitination by the DCX(DTL) complex. Phosphorylation of Thr-145 by PIM2 enhances CDKN1A stability and inhibits cell proliferation. Phosphorylation of Thr-145 by PIM1 results in the relocation of CDKN1A to the cytoplasm and enhanced CDKN1A protein stability. UV radiation-induced phosphorylation at Thr-80 by LKB1 and at Ser-146 by NUAK1 leads to its degradation. Post-translationally, ubiquitinated by MKRN1; leading to polyubiquitination and 26S proteasome-dependent degradation. Ubiquitinated by the DCX(DTL) complex, also named CRL4(CDT2) complex, leading to its degradation during S phase or following UV irradiation. Ubiquitination by the DCX(DTL) complex is essential to control replication licensing and is PCNA-dependent: interacts with PCNA via its PIP-box, while the presence of the containing the 'K+4' motif in the PIP box, recruit the DCX(DTL) complex, leading to its degradation. Ubiquitination at Ser-2 leads to degradation by the proteasome pathway. Ubiquitinated by RNF114; leading to proteasomal degradation. Acetylation leads to protein stability. Acetylated in vitro on Lys-141, Lys-154, Lys-161 and Lys-163. Deacetylation by HDAC1 is prevented by competitive binding of C10orf90/FATS to HDAC1. In terms of tissue distribution, expressed in all adult tissues, with 5-fold lower levels observed in the brain.

It is found in the cytoplasm. The protein resides in the nucleus. Plays an important role in controlling cell cycle progression and DNA damage-induced G2 arrest. Involved in p53/TP53 mediated inhibition of cellular proliferation in response to DNA damage. Also involved in p53-independent DNA damage-induced G2 arrest mediated by CREB3L1 in astrocytes and osteoblasts. Binds to and inhibits cyclin-dependent kinase activity, preventing phosphorylation of critical cyclin-dependent kinase substrates and blocking cell cycle progression. Functions in the nuclear localization and assembly of cyclin D-CDK4 complex and promotes its kinase activity towards RB1. At higher stoichiometric ratios, inhibits the kinase activity of the cyclin D-CDK4 complex. Inhibits DNA synthesis by DNA polymerase delta by competing with POLD3 for PCNA binding. Negatively regulates the CDK4- and CDK6-driven phosphorylation of RB1 in keratinocytes, thereby resulting in the release of E2F1 and subsequent transcription of E2F1-driven G1/S phase promoting genes. The chain is Cyclin-dependent kinase inhibitor 1 from Homo sapiens (Human).